The primary structure comprises 487 residues: UDP-N-acetylmuramate--L-alanine ligase (487 aa).

122-128 (GTHGKTS) is a binding site for ATP.

This sequence belongs to the MurCDEF family.

The protein resides in the cytoplasm. It carries out the reaction UDP-N-acetyl-alpha-D-muramate + L-alanine + ATP = UDP-N-acetyl-alpha-D-muramoyl-L-alanine + ADP + phosphate + H(+). It functions in the pathway cell wall biogenesis; peptidoglycan biosynthesis. Cell wall formation. In Corynebacterium urealyticum (strain ATCC 43042 / DSM 7109), this protein is UDP-N-acetylmuramate--L-alanine ligase.